A 378-amino-acid chain; its full sequence is RIB43A-like with coiled-coils protein 1 (378 aa).

Coiled coils occupy residues 153–250 (RMQQ…VTSD) and 279–334 (EQRA…CAEF).

The protein belongs to the RIB43A family. Microtubule inner protein component of sperm flagellar doublet microtubules.

It localises to the cytoplasm. The protein localises to the cytoskeleton. The protein resides in the flagellum axoneme. The chain is RIB43A-like with coiled-coils protein 1 (Ribc1) from Rattus norvegicus (Rat).